Here is a 171-residue protein sequence, read N- to C-terminus: Cytochrome c-type biogenesis protein CcmE (171 aa).

At 1–7 the chain is on the cytoplasmic side; sequence MNRKQKR. A helical; Signal-anchor for type II membrane protein transmembrane segment spans residues 8–28; the sequence is LAVIAGGMGFIAAAVLLVMFA. Residues 29-171 are Periplasmic-facing; sequence FSQSVAYFYM…NPGEEAKATQ (143 aa). The heme site is built by histidine 124 and tyrosine 128. The interval 132 to 171 is disordered; that stretch reads DVADRLKQQGLWKEGQGGQESPGKEGQGQENPGEEAKATQ.

This sequence belongs to the CcmE/CycJ family.

It localises to the cell inner membrane. Its function is as follows. Heme chaperone required for the biogenesis of c-type cytochromes. Transiently binds heme delivered by CcmC and transfers the heme to apo-cytochromes in a process facilitated by CcmF and CcmH. The protein is Cytochrome c-type biogenesis protein CcmE of Rhizobium leguminosarum bv. trifolii (strain WSM2304).